The primary structure comprises 488 residues: Cobyric acid synthase (488 aa).

A GATase cobBQ-type domain is found at 252–442; sequence RTRICVPILP…VHGLFASDAF (191 aa). Cys334 (nucleophile) is an active-site residue. Residue His434 is part of the active site.

The protein belongs to the CobB/CobQ family. CobQ subfamily.

The protein operates within cofactor biosynthesis; adenosylcobalamin biosynthesis. Catalyzes amidations at positions B, D, E, and G on adenosylcobyrinic A,C-diamide. NH(2) groups are provided by glutamine, and one molecule of ATP is hydrogenolyzed for each amidation. This Xanthobacter autotrophicus (strain ATCC BAA-1158 / Py2) protein is Cobyric acid synthase.